Consider the following 445-residue polypeptide: Tubulin beta-3 chain (445 aa).

Positions 11, 69, 138, 142, 143, 144, 204, and 226 each coordinate GTP. Glu-69 is a Mg(2+) binding site. Residues 425–445 (YQDATAEEYDEEEQDGEEEHD) are disordered. Over residues 429–445 (TAEEYDEEEQDGEEEHD) the composition is skewed to acidic residues.

This sequence belongs to the tubulin family. Dimer of alpha and beta chains. A typical microtubule is a hollow water-filled tube with an outer diameter of 25 nm and an inner diameter of 15 nM. Alpha-beta heterodimers associate head-to-tail to form protofilaments running lengthwise along the microtubule wall with the beta-tubulin subunit facing the microtubule plus end conferring a structural polarity. Microtubules usually have 13 protofilaments but different protofilament numbers can be found in some organisms and specialized cells. The cofactor is Mg(2+).

Its subcellular location is the cytoplasm. It is found in the cytoskeleton. Its function is as follows. Tubulin is the major constituent of microtubules, a cylinder consisting of laterally associated linear protofilaments composed of alpha- and beta-tubulin heterodimers. Microtubules grow by the addition of GTP-tubulin dimers to the microtubule end, where a stabilizing cap forms. Below the cap, tubulin dimers are in GDP-bound state, owing to GTPase activity of alpha-tubulin. The protein is Tubulin beta-3 chain (TUBB3) of Zea mays (Maize).